A 405-amino-acid chain; its full sequence is MIWRKEYLKKNYIKLLVPICVVLVLAYLNYAINYAVGYKLVYVHHSHAVAIILWVLLGFFQLELLVYWVLIFLVGPGKSPVFPPIDLYSENNKGLIPLPDLFFCDEKGFPYYCSNSNSIKLERSFFSKDVGYNVIKFDHYCIWIGQPIGQDNYLFFMKFMMGFLAFFIIVLIYCARFTRESIQQGEIDHNFIVLFVMSGFWIIMIGCLFGIHLRYVSINMTTLDEITINQRKRYNRWKDARKNPNMPSWMKTKNPPRKETGRKYVNVKHKTGRAIVRYYIDERPFDMGFRRNWINLVFNGNRNHGKDDEFYTLWRLAAAFVVFIIPFIDIPFSFRGKLQVKDDVEQELHEQENLLAKYTVYSSVVNDKFMNMIDEKLKKNSYSAPGYLVETTPQNNQSTIDKDSI.

Transmembrane regions (helical) follow at residues 12-32 (YIKLLVPICVVLVLAYLNYAI), 51-71 (IILWVLLGFFQLELLVYWVLI), 154-174 (LFFMKFMMGFLAFFIIVLIYC), 191-211 (FIVLFVMSGFWIIMIGCLFGI), and 310-330 (FYTLWRLAAAFVVFIIPFIDI). Positions 111–161 (YYCSNSNSIKLERSFFSKDVGYNVIKFDHYCIWIGQPIGQDNYLFFMKFMM) constitute a DHHC domain.

Belongs to the DHHC palmitoyltransferase family. PFA5 subfamily. Post-translationally, autopalmitoylated.

It is found in the membrane. The catalysed reaction is L-cysteinyl-[protein] + hexadecanoyl-CoA = S-hexadecanoyl-L-cysteinyl-[protein] + CoA. This is Palmitoyltransferase PFA5 (PFA5) from Candida albicans (strain SC5314 / ATCC MYA-2876) (Yeast).